Consider the following 79-residue polypeptide: Keratin-associated protein 21-1 (79 aa).

In terms of assembly, interacts with hair keratins.

In terms of biological role, in the hair cortex, hair keratin intermediate filaments are embedded in an interfilamentous matrix, consisting of hair keratin-associated proteins (KRTAP), which are essential for the formation of a rigid and resistant hair shaft through their extensive disulfide bond cross-linking with abundant cysteine residues of hair keratins. The matrix proteins include the high-sulfur and high-glycine-tyrosine keratins. The protein is Keratin-associated protein 21-1 (KRTAP21-1) of Homo sapiens (Human).